A 292-amino-acid chain; its full sequence is tRNA-cytidine(32) 2-sulfurtransferase (292 aa).

The PP-loop motif motif lies at 53–58; the sequence is SGGKDS. [4Fe-4S] cluster contacts are provided by Cys-128, Cys-131, and Cys-219.

This sequence belongs to the TtcA family. As to quaternary structure, homodimer. Mg(2+) is required as a cofactor. Requires [4Fe-4S] cluster as cofactor.

It is found in the cytoplasm. The enzyme catalyses cytidine(32) in tRNA + S-sulfanyl-L-cysteinyl-[cysteine desulfurase] + AH2 + ATP = 2-thiocytidine(32) in tRNA + L-cysteinyl-[cysteine desulfurase] + A + AMP + diphosphate + H(+). It functions in the pathway tRNA modification. Catalyzes the ATP-dependent 2-thiolation of cytidine in position 32 of tRNA, to form 2-thiocytidine (s(2)C32). The sulfur atoms are provided by the cysteine/cysteine desulfurase (IscS) system. The chain is tRNA-cytidine(32) 2-sulfurtransferase from Cereibacter sphaeroides (strain ATCC 17029 / ATH 2.4.9) (Rhodobacter sphaeroides).